A 267-amino-acid chain; its full sequence is Phosphatidylglycerol--prolipoprotein diacylglyceryl transferase (267 aa).

3 consecutive transmembrane segments (helical) span residues Val21–Gly41, Leu60–Tyr80, and Ile95–Trp115. Arg143 is an a 1,2-diacyl-sn-glycero-3-phospho-(1'-sn-glycerol) binding site. The next 2 membrane-spanning stretches (helical) occupy residues Gly203–Phe223 and Gly240–Tyr260.

Belongs to the Lgt family.

It is found in the cell inner membrane. The catalysed reaction is L-cysteinyl-[prolipoprotein] + a 1,2-diacyl-sn-glycero-3-phospho-(1'-sn-glycerol) = an S-1,2-diacyl-sn-glyceryl-L-cysteinyl-[prolipoprotein] + sn-glycerol 1-phosphate + H(+). The protein operates within protein modification; lipoprotein biosynthesis (diacylglyceryl transfer). Its function is as follows. Catalyzes the transfer of the diacylglyceryl group from phosphatidylglycerol to the sulfhydryl group of the N-terminal cysteine of a prolipoprotein, the first step in the formation of mature lipoproteins. The protein is Phosphatidylglycerol--prolipoprotein diacylglyceryl transferase of Glaesserella parasuis serovar 5 (strain SH0165) (Haemophilus parasuis).